A 41-amino-acid chain; its full sequence is uncharacterized protein (41 aa).

This is an uncharacterized protein from Dictyostelium discoideum (Social amoeba).